The chain runs to 335 residues: Probable cytosolic iron-sulfur protein assembly protein Ciao1 (335 aa).

WD repeat units lie at residues 12–51 (GHKG…WSTK), 57–96 (GHKR…FECN), 101–140 (GHEN…EFEC), 146–185 (SHTQ…NDWD), 192–231 (SHTS…NSAG), 250–289 (QHSR…KPDE), and 301–335 (AHDQ…KVTE).

The protein belongs to the WD repeat CIA1 family.

Essential component of the cytosolic iron-sulfur (Fe/S) protein assembly machinery. Required for the maturation of extramitochondrial Fe/S proteins. In Drosophila erecta (Fruit fly), this protein is Probable cytosolic iron-sulfur protein assembly protein Ciao1.